Consider the following 311-residue polypeptide: Methionyl-tRNA formyltransferase (311 aa).

Position 110–113 (110–113 (SLLP)) interacts with (6S)-5,6,7,8-tetrahydrofolate.

Belongs to the Fmt family.

The enzyme catalyses L-methionyl-tRNA(fMet) + (6R)-10-formyltetrahydrofolate = N-formyl-L-methionyl-tRNA(fMet) + (6S)-5,6,7,8-tetrahydrofolate + H(+). In terms of biological role, attaches a formyl group to the free amino group of methionyl-tRNA(fMet). The formyl group appears to play a dual role in the initiator identity of N-formylmethionyl-tRNA by promoting its recognition by IF2 and preventing the misappropriation of this tRNA by the elongation apparatus. This Streptococcus pyogenes serotype M28 (strain MGAS6180) protein is Methionyl-tRNA formyltransferase.